The chain runs to 362 residues: Protein RAFTIN 1B (362 aa).

The first 20 residues, 1 to 20, serve as a signal peptide directing secretion; sequence MARFLVALLAATLVAVQAGG. Residues 58-94 are disordered; the sequence is STSFVRDPEDRPPFDYRDYSRSSSDDEPSKSTVAASG. The segment covering 63–86 has biased composition (basic and acidic residues); it reads RDPEDRPPFDYRDYSRSSSDDEPS. Asparagine 102 is a glycosylation site (N-linked (GlcNAc...) asparagine). The BURP domain occupies 142–356; sequence FFHEEAVRVG…PYGHIIWAKN (215 aa).

As to expression, specifically expressed in anthers, in the tapetum and microspores (at protein level).

Functionally, required for pollen development. Probably synthesized in the tapetum, packaged in Ubisch bodies and transported at appropriate stages to the micropsores. This Triticum aestivum (Wheat) protein is Protein RAFTIN 1B (RAFTIN1B).